We begin with the raw amino-acid sequence, 603 residues long: Elongation factor 4 (603 aa).

The region spanning S7–R189 is the tr-type G domain. GTP contacts are provided by residues D19 to T24 and N136 to D139.

This sequence belongs to the TRAFAC class translation factor GTPase superfamily. Classic translation factor GTPase family. LepA subfamily.

Its subcellular location is the cell inner membrane. It catalyses the reaction GTP + H2O = GDP + phosphate + H(+). Required for accurate and efficient protein synthesis under certain stress conditions. May act as a fidelity factor of the translation reaction, by catalyzing a one-codon backward translocation of tRNAs on improperly translocated ribosomes. Back-translocation proceeds from a post-translocation (POST) complex to a pre-translocation (PRE) complex, thus giving elongation factor G a second chance to translocate the tRNAs correctly. Binds to ribosomes in a GTP-dependent manner. This Thermosynechococcus vestitus (strain NIES-2133 / IAM M-273 / BP-1) protein is Elongation factor 4.